We begin with the raw amino-acid sequence, 526 residues long: Peptide chain release factor 3 (526 aa).

One can recognise a tr-type G domain in the interval Asp8–Gln277. Residues Ser17–Thr24, Asp85–His89, and Asn139–Asp142 each bind GTP.

The protein belongs to the TRAFAC class translation factor GTPase superfamily. Classic translation factor GTPase family. PrfC subfamily.

It localises to the cytoplasm. Functionally, increases the formation of ribosomal termination complexes and stimulates activities of RF-1 and RF-2. It binds guanine nucleotides and has strong preference for UGA stop codons. It may interact directly with the ribosome. The stimulation of RF-1 and RF-2 is significantly reduced by GTP and GDP, but not by GMP. The polypeptide is Peptide chain release factor 3 (Actinobacillus succinogenes (strain ATCC 55618 / DSM 22257 / CCUG 43843 / 130Z)).